The chain runs to 483 residues: Pentatricopeptide repeat-containing protein At5g18950 (483 aa).

PPR repeat units follow at residues 144–178 (EPTLLEQYVKCLSEEGLVEEAIEVYNVLKDMGISS), 179–213 (SVVTCNSVLLGCLKARKLDRFWELHKEMVESEFDS), 218–246 (CLIRALCDGGDVSEGYELLKQGLKQGLDP), 247–281 (GQYVYAKLISGFCEIGNYACMSEVLHTMIAWNHFP), 282–316 (SMYIYQKIIKGLCMNKKQLEAYCIFKNLKDKGYAP), 317–351 (DRVVYTTMIRGFCEKGWLGSARKLWFEMIKKGMRP), 352–386 (NEFAYNVMIHGHFKRGEISLVEAFYNEMLRNGYGG), 387–421 (TMLSCNTMIKGFCSHGKSDEAFEIFKNMSETGVTP), and 422–456 (NAITYNALIKGFCKENKVEKGLKLYKELKALGLKP).

It belongs to the PPR family. P subfamily.

The protein is Pentatricopeptide repeat-containing protein At5g18950 of Arabidopsis thaliana (Mouse-ear cress).